The sequence spans 417 residues: Gamma-glutamyl phosphate reductase (417 aa).

The protein belongs to the gamma-glutamyl phosphate reductase family.

The protein resides in the cytoplasm. The catalysed reaction is L-glutamate 5-semialdehyde + phosphate + NADP(+) = L-glutamyl 5-phosphate + NADPH + H(+). Its pathway is amino-acid biosynthesis; L-proline biosynthesis; L-glutamate 5-semialdehyde from L-glutamate: step 2/2. In terms of biological role, catalyzes the NADPH-dependent reduction of L-glutamate 5-phosphate into L-glutamate 5-semialdehyde and phosphate. The product spontaneously undergoes cyclization to form 1-pyrroline-5-carboxylate. The chain is Gamma-glutamyl phosphate reductase from Cronobacter sakazakii (strain ATCC BAA-894) (Enterobacter sakazakii).